The following is a 166-amino-acid chain: MSNAHAQAGLATLDSSMAERLPSVSQTLFSAKAATGITFEDMAKELGRSEVAVAGMFYGQVQASAEDVVKLSQLLQVSQESLAPLMAFPNRGHAGPMPPVEPLIYRLYEVVQNYGYAFKAVMNEKFGDGIMSAIAFNTKVEKEVDEAGNPWVVITLKGKWLPFTRF.

Residues Arg-106, Glu-109, and Ser-132 contribute to the active site.

It belongs to the cyanase family.

It catalyses the reaction cyanate + hydrogencarbonate + 3 H(+) = NH4(+) + 2 CO2. Functionally, catalyzes the reaction of cyanate with bicarbonate to produce ammonia and carbon dioxide. The protein is Cyanate hydratase of Verticillium alfalfae (strain VaMs.102 / ATCC MYA-4576 / FGSC 10136) (Verticillium wilt of alfalfa).